The following is a 207-amino-acid chain: Probable GTP-binding protein EngB (207 aa).

An EngB-type G domain is found at 24–199 (GGYEVAFAGR…RAIVGAWLGL (176 aa)). GTP is bound by residues 32 to 39 (GRSNAGKS), 59 to 63 (GRTQQ), 77 to 80 (DLPG), 144 to 147 (TKAD), and 178 to 180 (YSG). Mg(2+) contacts are provided by S39 and T61.

The protein belongs to the TRAFAC class TrmE-Era-EngA-EngB-Septin-like GTPase superfamily. EngB GTPase family. Mg(2+) serves as cofactor.

In terms of biological role, necessary for normal cell division and for the maintenance of normal septation. In Xanthomonas euvesicatoria pv. vesicatoria (strain 85-10) (Xanthomonas campestris pv. vesicatoria), this protein is Probable GTP-binding protein EngB.